The sequence spans 329 residues: ATP phosphoribosyltransferase regulatory subunit (329 aa).

Belongs to the class-II aminoacyl-tRNA synthetase family. HisZ subfamily. Heteromultimer composed of HisG and HisZ subunits.

The protein resides in the cytoplasm. The protein operates within amino-acid biosynthesis; L-histidine biosynthesis; L-histidine from 5-phospho-alpha-D-ribose 1-diphosphate: step 1/9. In terms of biological role, required for the first step of histidine biosynthesis. May allow the feedback regulation of ATP phosphoribosyltransferase activity by histidine. This Streptococcus gordonii (strain Challis / ATCC 35105 / BCRC 15272 / CH1 / DL1 / V288) protein is ATP phosphoribosyltransferase regulatory subunit.